The following is a 543-amino-acid chain: Putative cysteine ligase BshC (543 aa).

Residues 419-440 (DEKNNDNIDEVVEEVKAQISDI) are a coiled coil.

It belongs to the BshC family.

Involved in bacillithiol (BSH) biosynthesis. May catalyze the last step of the pathway, the addition of cysteine to glucosamine malate (GlcN-Mal) to generate BSH. This is Putative cysteine ligase BshC from Oceanobacillus iheyensis (strain DSM 14371 / CIP 107618 / JCM 11309 / KCTC 3954 / HTE831).